A 478-amino-acid polypeptide reads, in one-letter code: Cytochrome c-552 (478 aa).

The signal sequence occupies residues Met-1–Ala-26. His-94 provides a ligand contact to heme c. Cys-122, Cys-125, and Lys-126 together coordinate heme. Heme c contacts are provided by Cys-160, Cys-163, His-164, Cys-209, Cys-212, and His-213. Ca(2+) is bound by residues Glu-215, Tyr-216, Lys-261, and Gln-263. Tyr-216 is a substrate binding site. His-264 provides a ligand contact to substrate. Positions 275, 282, 285, 286, 301, 314, 317, 318, and 393 each coordinate heme c.

This sequence belongs to the cytochrome c-552 family. The cofactor is Ca(2+). It depends on heme c as a cofactor.

The protein localises to the periplasm. The catalysed reaction is 6 Fe(III)-[cytochrome c] + NH4(+) + 2 H2O = 6 Fe(II)-[cytochrome c] + nitrite + 8 H(+). It participates in nitrogen metabolism; nitrate reduction (assimilation). In terms of biological role, catalyzes the reduction of nitrite to ammonia, consuming six electrons in the process. This Shigella flexneri protein is Cytochrome c-552.